We begin with the raw amino-acid sequence, 227 residues long: Triosephosphate isomerase (227 aa).

9 to 11 is a binding site for substrate; it reads NFK. The active-site Electrophile is His93. Catalysis depends on Glu141, which acts as the Proton acceptor. Residues Ile146, Gly180, and 201-202 each bind substrate; that span reads AS.

The protein belongs to the triosephosphate isomerase family. In terms of assembly, homotetramer; dimer of dimers.

It is found in the cytoplasm. The catalysed reaction is D-glyceraldehyde 3-phosphate = dihydroxyacetone phosphate. Its pathway is carbohydrate biosynthesis; gluconeogenesis. It participates in carbohydrate degradation; glycolysis; D-glyceraldehyde 3-phosphate from glycerone phosphate: step 1/1. In terms of biological role, involved in the gluconeogenesis. Catalyzes stereospecifically the conversion of dihydroxyacetone phosphate (DHAP) to D-glyceraldehyde-3-phosphate (G3P). The sequence is that of Triosephosphate isomerase from Saccharolobus solfataricus (strain ATCC 35092 / DSM 1617 / JCM 11322 / P2) (Sulfolobus solfataricus).